A 443-amino-acid chain; its full sequence is ATP-dependent protease ATPase subunit HslU (443 aa).

ATP-binding positions include Ile18, 60-65 (GVGKTE), Asp256, Glu321, and Arg393.

This sequence belongs to the ClpX chaperone family. HslU subfamily. As to quaternary structure, a double ring-shaped homohexamer of HslV is capped on each side by a ring-shaped HslU homohexamer. The assembly of the HslU/HslV complex is dependent on binding of ATP.

It is found in the cytoplasm. In terms of biological role, ATPase subunit of a proteasome-like degradation complex; this subunit has chaperone activity. The binding of ATP and its subsequent hydrolysis by HslU are essential for unfolding of protein substrates subsequently hydrolyzed by HslV. HslU recognizes the N-terminal part of its protein substrates and unfolds these before they are guided to HslV for hydrolysis. This Pectobacterium atrosepticum (strain SCRI 1043 / ATCC BAA-672) (Erwinia carotovora subsp. atroseptica) protein is ATP-dependent protease ATPase subunit HslU.